A 206-amino-acid chain; its full sequence is Small ribosomal subunit protein uS4 (206 aa).

The disordered stretch occupies residues 23 to 47 (AKSPLNRREYGPGQHGQRRKGKLSD). In terms of domain architecture, S4 RNA-binding spans 94-157 (RRLDAVIYRA…RQLAIVLESV (64 aa)).

This sequence belongs to the universal ribosomal protein uS4 family. In terms of assembly, part of the 30S ribosomal subunit. Contacts protein S5. The interaction surface between S4 and S5 is involved in control of translational fidelity.

One of the primary rRNA binding proteins, it binds directly to 16S rRNA where it nucleates assembly of the body of the 30S subunit. In terms of biological role, with S5 and S12 plays an important role in translational accuracy. The sequence is that of Small ribosomal subunit protein uS4 from Paracoccus denitrificans (strain Pd 1222).